The chain runs to 521 residues: Probable xyloglucan galactosyltransferase GT14 (521 aa).

Residues 1-30 are Cytoplasmic-facing; the sequence is MRPKNYSQMEKPISITTGKFRTNNNNNHNN. Residues 31–51 form a helical; Signal-anchor for type II membrane protein membrane-spanning segment; the sequence is VWFVVPLFFILCFVLLCFDYS. The Lumenal portion of the chain corresponds to 52-521; the sequence is ALFTDTDETA…SPYEEPQVLA (470 aa). The tract at residues 72 to 92 is disordered; sequence TSSEFTKDDNFSRFPDDPSPD. The segment covering 76–87 has biased composition (basic and acidic residues); that stretch reads FTKDDNFSRFPD. Residues Asn-81, Asn-177, Asn-203, Asn-249, Asn-265, and Asn-411 are each glycosylated (N-linked (GlcNAc...) asparagine). A disordered region spans residues 492 to 521; that stretch reads RQGKDGSDGFDDRDDYKYTFSPYEEPQVLA.

It belongs to the glycosyltransferase 47 family. Expressed in roots, hypocotyls, cotyledons, leaves, stems, stamens and carpels.

It localises to the golgi apparatus membrane. Its function is as follows. Functions in xyloglucan synthesis by adding side chains to the xylosylated glucan backbone. Involved in the galactosylation of hemicellulose xyloglucan. This Arabidopsis thaliana (Mouse-ear cress) protein is Probable xyloglucan galactosyltransferase GT14.